We begin with the raw amino-acid sequence, 1170 residues long: Protein SCAR4 (1170 aa).

Disordered stretches follow at residues 180-207 (KLGKDKRLRQSKKKGSHTTIKETPEDSR), 356-376 (NDADSPASTESEVKEAGSDDK), 631-674 (AAPK…PRDL), 701-742 (SYSG…NQTG), 783-819 (NQRQESPSETGSANSRTSSDESPPTQNGSVGVQSSPL), 960-980 (EESKATEEQSPSGVNGTSDTY), and 1026-1046 (HNNPHPAKLEEEEPQVDHPLE). Residues 183–195 (KDKRLRQSKKKGS) show a composition bias toward basic residues. Residues 198-207 (TIKETPEDSR) show a composition bias toward basic and acidic residues. The span at 356-365 (NDADSPASTE) shows a compositional bias: polar residues. Positions 366–376 (SEVKEAGSDDK) are enriched in basic and acidic residues. Composition is skewed to polar residues over residues 640–668 (SQDGSSMNPAQSKHISTSEISSENGTLMS), 701–716 (SYSGQEDPQTMSIVSD), 783–818 (NQRQESPSETGSANSRTSSDESPPTQNGSVGVQSSP), and 967–980 (EQSPSGVNGTSDTY). In terms of domain architecture, WH2 spans 1105-1123 (ENDSLLEIIRSKSFNLRPA).

Belongs to the SCAR/WAVE family. As to quaternary structure, interacts with SPK1. As to expression, expressed in expanding cotyledons, expanding leaves and expanding siliques containing developing embryos. Detected in unopened flower buds and in the expanding tip region of roots. Reduced expression in mature leaves.

It is found in the cytoplasm. It localises to the cytoskeleton. Functionally, involved in regulation of actin and microtubule organization. Part of a WAVE complex that activates the Arp2/3 complex. Regulates trichome branch positioning and expansion. This is Protein SCAR4 (SCAR4) from Arabidopsis thaliana (Mouse-ear cress).